The chain runs to 137 residues: MLVIILGVIGLLASSNLVSSSTSTRVGGHLPLTFDPPENELGYWCTYVESCRFCWDCEDGVCTSRIWGNNSTSIVENSYIKYCEVSRWGDQCRYDVEEHIYYTMNCSDPKPWNPYKIARKEWKKNEHFRKDLKKDEF.

A signal peptide spans 1-20 (MLVIILGVIGLLASSNLVSS). N-linked (GlcNAc...) asparagine; by host glycosylation is found at Asn-69, Asn-70, and Asn-105.

This sequence belongs to the asfivirus MGF 110 family.

In terms of biological role, plays a role in virus cell tropism, and may be required for efficient virus replication in macrophages. This African swine fever virus (isolate Pig/Kenya/KEN-50/1950) (ASFV) protein is Protein MGF 110-7L.